The following is a 981-amino-acid chain: uncharacterized protein (981 aa).

The 78-residue stretch at 535-612 (VLLNPVAIEI…SIASIIQKKS (78 aa)) folds into the Carrier domain. Position 571 is an O-(pantetheine 4'-phosphoryl)serine (Ser571).

The protein belongs to the ATP-dependent AMP-binding enzyme family.

This is an uncharacterized protein from Schizosaccharomyces pombe (strain 972 / ATCC 24843) (Fission yeast).